The chain runs to 248 residues: MNTSRWLTALCLAASMPAYAASAFKPIEMSDAELAELRGRFVMPGRIISFGIVMSTTWTNAAGDTSTVSANMHIDSSTITPQFYVQSTGSVGNGTNRDPGTGTVVGGAGLGSGQGVTQTVRAAGDGNTAYNNVGINVSENGLSPANVAQSGHALMAGGSFTTESAAGRVSVSANNGGVQMAIAAHNNQGNALQQIGGGNVLQGTVLQGNSNFVNNMTQLNVALGNNGLNAGALNCNLDQLKGLRTLGY.

An N-terminal signal peptide occupies residues 1 to 20 (MNTSRWLTALCLAASMPAYA).

It belongs to the FapE family. A minor component of purified amyloid fibrils. Fibrils are resistant to boiling in 2% (weight/vol) SDS and require &gt;90% (vol/vol) formic acid to dissolve.

It localises to the fimbrium. Its subcellular location is the secreted. A minor component of the functional amyloid in this bacterium. Upon overexpression of the endogenous six-gene locus (fapA-fapF) in situ, cells form large clumps during liquid growth, make large amounts of biofilm and produce amyloid fibrils. Expression of the 6 gene operon in E.coli strain BL21(DE3) induces flocculation and biofilm formation with copious extracellular fibrils. This is Functional amyloid sbunit FapE from Pseudomonas fluorescens.